Here is a 556-residue protein sequence, read N- to C-terminus: Arginine--tRNA ligase (556 aa).

The 'HIGH' region motif lies at 132 to 142 (ANPTGDLHLGH).

It belongs to the class-I aminoacyl-tRNA synthetase family. Monomer.

Its subcellular location is the cytoplasm. The enzyme catalyses tRNA(Arg) + L-arginine + ATP = L-arginyl-tRNA(Arg) + AMP + diphosphate. The chain is Arginine--tRNA ligase from Bacillus velezensis (strain DSM 23117 / BGSC 10A6 / LMG 26770 / FZB42) (Bacillus amyloliquefaciens subsp. plantarum).